The following is a 329-amino-acid chain: Tetraacyldisaccharide 4'-kinase (329 aa).

Residue 57-64 coordinates ATP; that stretch reads TAGGSGKT.

It belongs to the LpxK family.

The enzyme catalyses a lipid A disaccharide + ATP = a lipid IVA + ADP + H(+). It functions in the pathway glycolipid biosynthesis; lipid IV(A) biosynthesis; lipid IV(A) from (3R)-3-hydroxytetradecanoyl-[acyl-carrier-protein] and UDP-N-acetyl-alpha-D-glucosamine: step 6/6. Its function is as follows. Transfers the gamma-phosphate of ATP to the 4'-position of a tetraacyldisaccharide 1-phosphate intermediate (termed DS-1-P) to form tetraacyldisaccharide 1,4'-bis-phosphate (lipid IVA). The polypeptide is Tetraacyldisaccharide 4'-kinase (Thiobacillus denitrificans (strain ATCC 25259 / T1)).